Here is a 289-residue protein sequence, read N- to C-terminus: Ribosomal RNA small subunit methyltransferase A (289 aa).

S-adenosyl-L-methionine contacts are provided by asparagine 21, leucine 23, glycine 48, glutamate 69, aspartate 94, and asparagine 120.

Belongs to the class I-like SAM-binding methyltransferase superfamily. rRNA adenine N(6)-methyltransferase family. RsmA subfamily.

It localises to the cytoplasm. It catalyses the reaction adenosine(1518)/adenosine(1519) in 16S rRNA + 4 S-adenosyl-L-methionine = N(6)-dimethyladenosine(1518)/N(6)-dimethyladenosine(1519) in 16S rRNA + 4 S-adenosyl-L-homocysteine + 4 H(+). Functionally, specifically dimethylates two adjacent adenosines (A1518 and A1519) in the loop of a conserved hairpin near the 3'-end of 16S rRNA in the 30S particle. May play a critical role in biogenesis of 30S subunits. This chain is Ribosomal RNA small subunit methyltransferase A, found in Actinobacillus pleuropneumoniae serotype 3 (strain JL03).